The sequence spans 713 residues: Cyclomaltodextrin glucanotransferase (713 aa).

The first 27 residues, 1-27 (MKKQVKWLTSVSMSVGIALGAALPVWA), serve as a signal peptide directing secretion. The A1 stretch occupies residues 28-165 (SPDTSVNNKL…NIKVVMDFAP (138 aa)). Residues aspartate 54, asparagine 56, asparagine 59, asparagine 60, glycine 78, and aspartate 80 each coordinate Ca(2+). 127–128 (YW) is a binding site for substrate. Asparagine 166 contributes to the Ca(2+) binding site. The b stretch occupies residues 166–229 (NHTNPASSTD…NLYDLADINQ (64 aa)). Substrate is bound at residue histidine 167. Isoleucine 217 serves as a coordination point for Ca(2+). Substrate is bound at residue 220 to 223 (NLYD). Aspartate 226 contributes to the Ca(2+) binding site. An A2 region spans residues 230-434 (NNNTIDSYLK…LRKSNPALAY (205 aa)). Residue arginine 254 participates in substrate binding. Aspartate 256 acts as the Nucleophile in catalysis. 259–260 (KH) is a substrate binding site. Histidine 260 is a binding site for Ca(2+). The active-site Proton donor is glutamate 285. 3 residues coordinate substrate: histidine 355, aspartate 399, and arginine 403. The tract at residues 435–522 (GSTTQRWVNS…GTAVWQYTTT (88 aa)) is c. The d stretch occupies residues 523–609 (ESSPIIGNVG…SAAFNNFNVL (87 aa)). One can recognise an IPT/TIG domain in the interval 526–606 (PIIGNVGPTM…GTTSAAFNNF (81 aa)). The 106-residue stretch at 608-713 (VLTADQVTVR…VATVTVDWQN (106 aa)) folds into the CBM20 domain. The e stretch occupies residues 610 to 713 (TADQVTVRFK…VATVTVDWQN (104 aa)).

Belongs to the glycosyl hydrolase 13 family. As to quaternary structure, monomer. The cofactor is Ca(2+).

Its subcellular location is the secreted. The catalysed reaction is Cyclizes part of a (1-&gt;4)-alpha-D-glucan chain by formation of a (1-&gt;4)-alpha-D-glucosidic bond.. The polypeptide is Cyclomaltodextrin glucanotransferase (Paenibacillus macerans (Bacillus macerans)).